The following is a 590-amino-acid chain: Transcription factor GTE7 (590 aa).

Positions 125–160 are disordered; it reads LNNFTGEKNDLGPKKKKQKKNVSGLKRSNQFGPSDP. The 107-residue stretch at 164 to 270 folds into the Bromo domain; sequence KLLAGMLNTC…DHFDGMFNPA (107 aa). Disordered regions lie at residues 282-400 and 476-590; these read TGSS…KDPN and RQGF…EAQC. Over residues 288–298 the composition is skewed to basic and acidic residues; the sequence is PEPDFKPDFKQ. The segment covering 347 to 369 has biased composition (pro residues); that stretch reads PSPPPPPPVIQPELPQPQPPPPQ. The 82-residue stretch at 394-475 folds into the NET domain; that stretch reads PKAKDPNKRL…NYKKMASKIK (82 aa). Residues 498-508 are compositionally biased toward basic and acidic residues; that stretch reads SAEKRTRRGDA. The segment covering 509–521 has biased composition (acidic residues); sequence GEEDVDIGEDIPI. Residues 537-562 are compositionally biased toward low complexity; it reads AAAASSGSSSSGSSSSSGGSSSSSDS.

The protein resides in the nucleus. This chain is Transcription factor GTE7 (GTE7), found in Arabidopsis thaliana (Mouse-ear cress).